The chain runs to 956 residues: DNA ligase 4 (956 aa).

10 residues coordinate ATP: Glu-307, Lys-309, Ile-310, Arg-314, Glu-371, Phe-409, Glu-476, Lys-481, Lys-498, and Lys-500. The active-site N6-AMP-lysine intermediate is the Lys-309. Residue Glu-371 coordinates Mg(2+). Glu-476 contacts Mg(2+). Positions 666 to 700 (LEDRKRRNAGPGRGAKRLKLANVSSDEDELGTDER) are disordered. 2 BRCT domains span residues 700 to 793 (RPTS…PRNL) and 857 to 956 (PKGM…DYPL).

This sequence belongs to the ATP-dependent DNA ligase family. It depends on Mg(2+) as a cofactor.

It is found in the nucleus. The catalysed reaction is ATP + (deoxyribonucleotide)n-3'-hydroxyl + 5'-phospho-(deoxyribonucleotide)m = (deoxyribonucleotide)n+m + AMP + diphosphate.. Its function is as follows. DNA ligase involved in DNA non-homologous end joining (NHEJ); required for double-strand break (DSB) repair. This Yarrowia lipolytica (strain CLIB 122 / E 150) (Yeast) protein is DNA ligase 4 (LIG4).